A 328-amino-acid chain; its full sequence is Malate dehydrogenase (328 aa).

Residue 11–17 (GAAGQIG) coordinates NAD(+). Positions 92 and 98 each coordinate substrate. Residues asparagine 105, glutamine 112, and 129 to 131 (TGN) each bind NAD(+). 2 residues coordinate substrate: asparagine 131 and arginine 162. Catalysis depends on histidine 187, which acts as the Proton acceptor.

Belongs to the LDH/MDH superfamily. MDH type 2 family.

The enzyme catalyses (S)-malate + NAD(+) = oxaloacetate + NADH + H(+). In terms of biological role, catalyzes the reversible oxidation of malate to oxaloacetate. This Paenarthrobacter aurescens (strain TC1) protein is Malate dehydrogenase.